A 201-amino-acid chain; its full sequence is Small ribosomal subunit protein uS4 (201 aa).

One can recognise an S4 RNA-binding domain in the interval 92 to 155 (RRLDAVVYAL…QKLDIIQESV (64 aa)).

Belongs to the universal ribosomal protein uS4 family. In terms of assembly, part of the 30S ribosomal subunit. Contacts protein S5. The interaction surface between S4 and S5 is involved in control of translational fidelity.

One of the primary rRNA binding proteins, it binds directly to 16S rRNA where it nucleates assembly of the body of the 30S subunit. Its function is as follows. With S5 and S12 plays an important role in translational accuracy. The protein is Small ribosomal subunit protein uS4 of Staphylococcus carnosus (strain TM300).